A 499-amino-acid polypeptide reads, in one-letter code: Putative antiporter subunit mnhD2 (499 aa).

The next 14 membrane-spanning stretches (helical) occupy residues 1–21 (MSNL…ILVF), 31–51 (ILSI…LIYV), 77–97 (LSLL…AYGF), 107–127 (FHLP…FLTS), 129–149 (LFNL…LVTL), 160–180 (IVYV…IGML), 208–228 (ISLV…FMWL), 239–259 (LAAL…IRFF), 272–292 (TLLV…VIAY), 307–327 (IGFI…GAIF), 329–349 (LAND…LVYM), 367–387 (FFGV…PFSG), 402–422 (GNYI…YSLF), and 449–469 (GLLS…PVVL).

Belongs to the CPA3 antiporters (TC 2.A.63) subunit D family. As to quaternary structure, may form a heterooligomeric complex that consists of seven subunits: mnhA2, mnhB2, mnhC2, mnhD2, mnhE2, mnhF2 and mnhG2.

It is found in the cell membrane. This chain is Putative antiporter subunit mnhD2 (mnhD2), found in Staphylococcus epidermidis (strain ATCC 35984 / DSM 28319 / BCRC 17069 / CCUG 31568 / BM 3577 / RP62A).